Consider the following 251-residue polypeptide: Small ribosomal subunit protein uS2 (251 aa).

Serine 2 is subject to N-acetylserine. A disordered region spans residues 213-251; sequence QVAEEATAAADEDVKEEVAEEQTEAADWAEGNTEEVASW. Positions 222–236 are enriched in acidic residues; the sequence is ADEDVKEEVAEEQTE.

Belongs to the universal ribosomal protein uS2 family. In terms of assembly, component of the small ribosomal subunit. Mature ribosomes consist of a small (40S) and a large (60S) subunit. The 40S subunit contains about 33 different proteins and 1 molecule of RNA (18S). The 60S subunit contains about 49 different proteins and 3 molecules of RNA (25S, 5.8S and 5S). Interacts with RPS21.

It is found in the cytoplasm. Its function is as follows. Required for the assembly and/or stability of the 40S ribosomal subunit. Required for the processing of the 20S rRNA-precursor to mature 18S rRNA in a late step of the maturation of 40S ribosomal subunits. In Lachancea thermotolerans (strain ATCC 56472 / CBS 6340 / NRRL Y-8284) (Yeast), this protein is Small ribosomal subunit protein uS2.